A 306-amino-acid chain; its full sequence is Ornithine carbamoyltransferase (306 aa).

Residues 46–49, Gln73, Arg97, and 124–127 contribute to the carbamoyl phosphate site; these read STRT and HPTQ. L-ornithine-binding positions include Asn156, Asp220, and 224–225; that span reads SM. Residues 260–261 and Arg288 contribute to the carbamoyl phosphate site; that span reads CL.

The protein belongs to the aspartate/ornithine carbamoyltransferase superfamily. OTCase family.

It localises to the cytoplasm. The catalysed reaction is carbamoyl phosphate + L-ornithine = L-citrulline + phosphate + H(+). Its pathway is amino-acid degradation; L-arginine degradation via ADI pathway; carbamoyl phosphate from L-arginine: step 2/2. Functionally, reversibly catalyzes the transfer of the carbamoyl group from carbamoyl phosphate (CP) to the N(epsilon) atom of ornithine (ORN) to produce L-citrulline. This chain is Ornithine carbamoyltransferase, found in Campylobacter jejuni subsp. jejuni serotype O:6 (strain 81116 / NCTC 11828).